The sequence spans 403 residues: Odorant receptor 43b (403 aa).

Residues 1-49 (MFGHFKLVYPAPISEPIQSRDSNAYMMETLRNSGLNLKNDFGIGRKIWR) are Cytoplasmic-facing. Residues 50 to 70 (VFSFTYNMVILPVSFPINYVI) traverse the membrane as a helical segment. Over 71-83 (HLAEFPPELLLQS) the chain is Extracellular. The chain crosses the membrane as a helical span at residues 84-104 (LQLCLNTWCFALKFFTLIVYT). Over 105 to 139 (HRLELANKHFDELDKYCVKPAEKRKVRDMVATITR) the chain is Cytoplasmic. Residues 140–160 (LYLTFVVVYVLYATSTLLDGL) traverse the membrane as a helical segment. At 161–193 (LHHRVPYNTYYPFINWRVDRTQMYIQSFLEYFT) the chain is on the extracellular side. Residues 194–214 (VGYAIYVATATDSYPVIYVAA) traverse the membrane as a helical segment. The Cytoplasmic portion of the chain corresponds to 215-271 (LRTHILLLKDRIIYLGDPSNEGSSDPSYMFKSLVDCIKAHRTMLNFCDAIQPIISGT). A helical transmembrane segment spans residues 272–292 (IFAQFIICGSILGIIMINMVL). Over 293-299 (FADQSTR) the chain is Extracellular. A helical membrane pass occupies residues 300–320 (FGIVIYVMAVLLQTFPLCFYC). Topologically, residues 321–372 (NAIVDDCKELAHALFHSAWWVQDKRYQRTVIQFLQKLQQPMTFTAMNIFNIN) are cytoplasmic. A helical transmembrane segment spans residues 373 to 393 (LATNINVAKFAFTVYAIASGM). At 394 to 403 (NLDQKLSIKE) the chain is on the extracellular side.

Belongs to the insect chemoreceptor superfamily. Heteromeric odorant receptor channel (TC 1.A.69) family. Or2a subfamily. In terms of assembly, interacts with Orco. Complexes exist early in the endomembrane system in olfactory sensory neurons (OSNs), coupling these complexes to the conserved ciliary trafficking pathway. As to expression, expressed in 16 olfactory receptor neurons in a broad area across the antenna, including both anterior and posterior faces and in the maxillary palp. This expression pattern matches the distribution of the small sensilla basiconica. Expression in the antenna is observed late in antennal development at 93 hours APF.

The protein resides in the cell membrane. Its function is as follows. Odorant receptor which mediates acceptance or avoidance behavior, depending on its substrates. The odorant receptor repertoire encodes a large collection of odor stimuli that vary widely in identity, intensity, and duration. May form a complex with Orco to form odorant-sensing units, providing sensitive and prolonged odorant signaling and calcium permeability. In Drosophila melanogaster (Fruit fly), this protein is Odorant receptor 43b (Or43b).